Here is a 338-residue protein sequence, read N- to C-terminus: UDP-N-acetylenolpyruvoylglucosamine reductase (338 aa).

Residues 17–188 (IAARTDWWID…MYVDYRLRLK (172 aa)) enclose the FAD-binding PCMH-type domain. Arg164 is a catalytic residue. Ser237 (proton donor) is an active-site residue. The active site involves Glu333.

It belongs to the MurB family. It depends on FAD as a cofactor.

The protein localises to the cytoplasm. It catalyses the reaction UDP-N-acetyl-alpha-D-muramate + NADP(+) = UDP-N-acetyl-3-O-(1-carboxyvinyl)-alpha-D-glucosamine + NADPH + H(+). Its pathway is cell wall biogenesis; peptidoglycan biosynthesis. Functionally, cell wall formation. This Porphyromonas gingivalis (strain ATCC BAA-308 / W83) protein is UDP-N-acetylenolpyruvoylglucosamine reductase.